The sequence spans 469 residues: Actin-related protein 4 (469 aa).

Residues Pro-104–Thr-136 form a disordered region. The segment covering Asp-119 to Thr-136 has biased composition (acidic residues).

Belongs to the actin family. ARP4 subfamily. In terms of assembly, component of the NuA4 histone acetyltransferase complex, of the INO80 chromatin remodeling complex, and of the SWR1 chromatin remodeling complex.

It localises to the nucleus. In terms of biological role, chromatin interaction component of the NuA4 histone acetyltransferase complex which is involved in transcriptional activation of selected genes principally by acetylation of nucleosomal histone H4 and H2A. The NuA4 complex is also involved in DNA repair. Is required for NuA4 complex integrity. Component of the SWR1 complex which mediates the ATP-dependent exchange of histone H2A for the H2A variant H2A.Z leading to transcriptional regulation of selected genes by chromatin remodeling. Component of the INO80 complex which remodels chromatin by shifting nucleosomes and is involved in DNA repair. This is Actin-related protein 4 (arp-4) from Neurospora crassa (strain ATCC 24698 / 74-OR23-1A / CBS 708.71 / DSM 1257 / FGSC 987).